The following is a 1375-amino-acid chain: ARF guanine-nucleotide exchange factor GNL2 (1375 aa).

The 191-residue stretch at H486–N676 folds into the SEC7 domain. The active site involves E590.

Homodimer. In terms of tissue distribution, preferentially expressed in mature pollen grains and growing pollen tubes.

It localises to the cytoplasm. The protein resides in the cytosol. The protein localises to the membrane. Activates the ARF proteins by exchanging bound GDP for free GTP. Plays a role in vesicular protein sorting. Essential for pollen germination. This chain is ARF guanine-nucleotide exchange factor GNL2 (GNL2), found in Arabidopsis thaliana (Mouse-ear cress).